The following is a 266-amino-acid chain: Trypsin Blo t 3 (266 aa).

The first 15 residues, 1–15 (MKVLVLFCLVSLAAA), serve as a signal peptide directing secretion. Residues 16–35 (GPLKDALNKAQVDAFYAEGY) constitute a propeptide that is removed on maturation. Residues 36–260 (IVDGSNAADG…RVGNYISWIK (225 aa)) enclose the Peptidase S1 domain. An intrachain disulfide couples Cys-60 to Cys-76. Residues His-75 and Asp-120 each act as charge relay system in the active site. 2 disulfide bridges follow: Cys-187–Cys-204 and Cys-216–Cys-240. Ser-220 functions as the Charge relay system in the catalytic mechanism.

The protein belongs to the peptidase S1 family.

It localises to the secreted. It catalyses the reaction Preferential cleavage: Arg-|-Xaa, Lys-|-Xaa.. The protein is Trypsin Blo t 3 of Blomia tropicalis (Mite).